A 485-amino-acid polypeptide reads, in one-letter code: Adenosylhomocysteinase (485 aa).

Residues T64, D139, and E205 each contribute to the substrate site. 206–208 (TTT) lines the NAD(+) pocket. K235 and D239 together coordinate substrate. Residues N240, 269 to 274 (GYGDVG), E292, N327, and 348 to 350 (IGH) each bind NAD(+).

This sequence belongs to the adenosylhomocysteinase family. As to quaternary structure, homotetramer. It depends on NAD(+) as a cofactor.

The catalysed reaction is S-adenosyl-L-homocysteine + H2O = L-homocysteine + adenosine. It functions in the pathway amino-acid biosynthesis; L-homocysteine biosynthesis; L-homocysteine from S-adenosyl-L-homocysteine: step 1/1. Its function is as follows. Adenosylhomocysteine is a competitive inhibitor of S-adenosyl-L-methionine-dependent methyl transferase reactions; therefore adenosylhomocysteinase may play a key role in the control of methylations via regulation of the intracellular concentration of adenosylhomocysteine. This Mesembryanthemum crystallinum (Common ice plant) protein is Adenosylhomocysteinase (SAHH).